The primary structure comprises 53 residues: UPF0391 membrane protein Patl_1732 (53 aa).

The next 2 membrane-spanning stretches (helical) occupy residues 4 to 24 and 28 to 48; these read WAVIFLVIALVAAVLGFGGIA and AGIAKIIFFVFLVLLVISVVM.

It belongs to the UPF0391 family.

It is found in the cell membrane. The chain is UPF0391 membrane protein Patl_1732 from Pseudoalteromonas atlantica (strain T6c / ATCC BAA-1087).